The following is a 687-amino-acid chain: Mitochondrial 15S rRNA processing factor ppr3 (687 aa).

A mitochondrion-targeting transit peptide spans 1–49 (MLNKCSGSLTLLAVRRFCGPCRRLHYHKDNPNNINIAKNLLNNNIQARC). PPR repeat units follow at residues 262–296 (NGLV…SITP), 297–331 (SKDF…ATSI), 334–368 (SAET…PIDP), and 372–407 (TTFV…GLRP).

The protein belongs to the CCM1 family. Binds to mitochondrial small subunit 15S rRNA.

Its subcellular location is the mitochondrion. Regulates mitochondrial small subunit maturation by controlling 15S rRNA 5'-end processing. Localizes to the 5' precursor of the 15S rRNA in a position that is subsequently occupied by mS47 in the mature yeast mtSSU. Uses structure and sequence-specific RNA recognition, binding to a single-stranded region of the precursor and specifically recognizing bases -6 to -1. The exchange of Ccm1 for mS47 is coupled to the irreversible removal of precursor rRNA that is accompanied by conformational changes of the mitoribosomal proteins uS5m and mS26. These conformational changes signal completion of 5'-end rRNA processing through protection of the mature 5'-end of the 15S rRNA and stabilization of mS47. The removal of the 5' precursor together with the dissociation of Ccm1 may be catalyzed by the 5'-3' exoribonuclease Pet127. Involved in the specific removal of group I introns in mitochondrial encoded transcripts. The polypeptide is Mitochondrial 15S rRNA processing factor ppr3 (Schizosaccharomyces pombe (strain 972 / ATCC 24843) (Fission yeast)).